Here is a 150-residue protein sequence, read N- to C-terminus: Large ribosomal subunit protein uL15 (150 aa).

The tract at residues 1–55 is disordered; the sequence is MADNEILQMHDLKPAPGAKKDRTRVGRGEGSKGKTAGRGAKGQTKRNHVRPGFEG. Basic and acidic residues predominate over residues 8–32; that stretch reads QMHDLKPAPGAKKDRTRVGRGEGSK.

It belongs to the universal ribosomal protein uL15 family. As to quaternary structure, part of the 50S ribosomal subunit.

Functionally, binds to the 23S rRNA. This chain is Large ribosomal subunit protein uL15, found in Bifidobacterium longum (strain DJO10A).